A 204-amino-acid polypeptide reads, in one-letter code: N-(5'-phosphoribosyl)anthranilate isomerase (204 aa).

It belongs to the TrpF family.

It carries out the reaction N-(5-phospho-beta-D-ribosyl)anthranilate = 1-(2-carboxyphenylamino)-1-deoxy-D-ribulose 5-phosphate. The protein operates within amino-acid biosynthesis; L-tryptophan biosynthesis; L-tryptophan from chorismate: step 3/5. In Bacillus cereus (strain AH187), this protein is N-(5'-phosphoribosyl)anthranilate isomerase.